The sequence spans 688 residues: DNA-directed RNA polymerase subunit beta' (688 aa).

4 residues coordinate Zn(2+): Cys-69, Cys-71, Cys-87, and Cys-90. Mg(2+) is bound by residues Asp-489, Asp-491, and Asp-493.

It belongs to the RNA polymerase beta' chain family. RpoC1 subfamily. As to quaternary structure, in plastids the minimal PEP RNA polymerase catalytic core is composed of four subunits: alpha, beta, beta', and beta''. When a (nuclear-encoded) sigma factor is associated with the core the holoenzyme is formed, which can initiate transcription. Mg(2+) is required as a cofactor. It depends on Zn(2+) as a cofactor.

It localises to the plastid. The protein localises to the chloroplast. It carries out the reaction RNA(n) + a ribonucleoside 5'-triphosphate = RNA(n+1) + diphosphate. Functionally, DNA-dependent RNA polymerase catalyzes the transcription of DNA into RNA using the four ribonucleoside triphosphates as substrates. The polypeptide is DNA-directed RNA polymerase subunit beta' (Piper cenocladum (Ant piper)).